The following is a 578-amino-acid chain: MKDTIRQLIQQALTQLVNDGVLPEGLSPAIQVENARDKTHGDFASNIAMMLAKPAGMKPRDLAEKLINALPASADISKVEIAGPGFLNFFQNTDALANRLDAALADARLGVRKAGPSEKVVIDMSAPNLAKEMHVGHLRSTIIGDSVARVLEFLGDNVIRQNHVGDWGTQFGMLMAYLQENPITSDELSDLENFYRAAKKRFDESEEFATRARGLVVKLQAGDPECLALWTRFKDISLSHCQKTYELLNVKLTMADVMGESAYNDDLANVVADLKAKGLLVESQGAQCVFLEEFKNSEGEPLPVIVQKADGGYLYATTDLAAVRYRSNVLNADRALYFVDQRQALHFNQVFEVARRAGFVGHPMQMEHMGFGTMNGADGRPFKTRDGGTVKLIDLLTEAKERAYALVKEKNPSLTEAELRHIGEVVGIGAVKYADLSKHRTSDYSFNFELMLNFEGNTAPYLLYAYTRVAGVFRKLGKGFDEVEGNIVLQAAHEQDLAARLAQFGEILNNVADKGTPHVLCSYLYDLAGLFSSFYENCPILAAETLEQQQSRLRLAALTGRTLKQGLELLGLETLERM.

Residues Pro-127–His-137 carry the 'HIGH' region motif.

It belongs to the class-I aminoacyl-tRNA synthetase family. As to quaternary structure, monomer.

It is found in the cytoplasm. It catalyses the reaction tRNA(Arg) + L-arginine + ATP = L-arginyl-tRNA(Arg) + AMP + diphosphate. The protein is Arginine--tRNA ligase of Pseudomonas putida (strain GB-1).